The sequence spans 179 residues: Large ribosomal subunit protein uL5 (179 aa).

Belongs to the universal ribosomal protein uL5 family. In terms of assembly, part of the 50S ribosomal subunit; part of the 5S rRNA/L5/L18/L25 subcomplex. Contacts the 5S rRNA and the P site tRNA. Forms a bridge to the 30S subunit in the 70S ribosome.

Its function is as follows. This is one of the proteins that bind and probably mediate the attachment of the 5S RNA into the large ribosomal subunit, where it forms part of the central protuberance. In the 70S ribosome it contacts protein S13 of the 30S subunit (bridge B1b), connecting the 2 subunits; this bridge is implicated in subunit movement. Contacts the P site tRNA; the 5S rRNA and some of its associated proteins might help stabilize positioning of ribosome-bound tRNAs. This Shewanella piezotolerans (strain WP3 / JCM 13877) protein is Large ribosomal subunit protein uL5.